The chain runs to 650 residues: ATP-dependent zinc metalloprotease FtsH (650 aa).

Residues Met1–Leu10 lie on the Cytoplasmic side of the membrane. A helical membrane pass occupies residues Trp11 to Val31. Residues Lys32–Ala123 are Extracellular-facing. Residues Leu124–Phe144 traverse the membrane as a helical segment. Residues Met145–Asp650 are Cytoplasmic-facing. An ATP-binding site is contributed by Gly217–Thr224. His437 is a binding site for Zn(2+). The active site involves Glu438. Zn(2+) is bound by residues His441 and Asp515.

In the central section; belongs to the AAA ATPase family. This sequence in the C-terminal section; belongs to the peptidase M41 family. As to quaternary structure, homohexamer. Requires Zn(2+) as cofactor.

Its subcellular location is the cell membrane. Acts as a processive, ATP-dependent zinc metallopeptidase for both cytoplasmic and membrane proteins. Plays a role in the quality control of integral membrane proteins. This is ATP-dependent zinc metalloprotease FtsH from Mesoplasma florum (strain ATCC 33453 / NBRC 100688 / NCTC 11704 / L1) (Acholeplasma florum).